Reading from the N-terminus, the 442-residue chain is 3-phosphoshikimate 1-carboxyvinyltransferase (442 aa).

Residues Lys25, Ser26, and Arg30 each coordinate 3-phosphoshikimate. Phosphoenolpyruvate is bound at residue Lys25. Phosphoenolpyruvate contacts are provided by Gly96 and Arg124. 3-phosphoshikimate is bound by residues Ser171, Ser172, Gln173, Ser203, Asp325, and Lys352. Gln173 lines the phosphoenolpyruvate pocket. Asp325 serves as the catalytic Proton acceptor. Phosphoenolpyruvate is bound by residues Arg356, Arg400, and Lys425.

The protein belongs to the EPSP synthase family. In terms of assembly, monomer.

The protein resides in the cytoplasm. It catalyses the reaction 3-phosphoshikimate + phosphoenolpyruvate = 5-O-(1-carboxyvinyl)-3-phosphoshikimate + phosphate. Its pathway is metabolic intermediate biosynthesis; chorismate biosynthesis; chorismate from D-erythrose 4-phosphate and phosphoenolpyruvate: step 6/7. Functionally, catalyzes the transfer of the enolpyruvyl moiety of phosphoenolpyruvate (PEP) to the 5-hydroxyl of shikimate-3-phosphate (S3P) to produce enolpyruvyl shikimate-3-phosphate and inorganic phosphate. In Bordetella pertussis (strain Tohama I / ATCC BAA-589 / NCTC 13251), this protein is 3-phosphoshikimate 1-carboxyvinyltransferase.